The primary structure comprises 157 residues: Xanthine-guanine phosphoribosyltransferase (157 aa).

Residues Arg42–Gly43 and Asp93–Thr101 each bind 5-phospho-alpha-D-ribose 1-diphosphate. Asp94 serves as a coordination point for Mg(2+). Residues Asp97 and Ile140 each coordinate guanine. Positions 97 and 140 each coordinate xanthine. Residues Asp97–Thr101 and Trp139–Ile140 each bind GMP.

It belongs to the purine/pyrimidine phosphoribosyltransferase family. XGPT subfamily. In terms of assembly, homotetramer. Requires Mg(2+) as cofactor.

It localises to the cell inner membrane. The catalysed reaction is GMP + diphosphate = guanine + 5-phospho-alpha-D-ribose 1-diphosphate. It catalyses the reaction XMP + diphosphate = xanthine + 5-phospho-alpha-D-ribose 1-diphosphate. It carries out the reaction IMP + diphosphate = hypoxanthine + 5-phospho-alpha-D-ribose 1-diphosphate. The protein operates within purine metabolism; GMP biosynthesis via salvage pathway; GMP from guanine: step 1/1. Its pathway is purine metabolism; XMP biosynthesis via salvage pathway; XMP from xanthine: step 1/1. Its function is as follows. Purine salvage pathway enzyme that catalyzes the transfer of the ribosyl-5-phosphate group from 5-phospho-alpha-D-ribose 1-diphosphate (PRPP) to the N9 position of the 6-oxopurines guanine and xanthine to form the corresponding ribonucleotides GMP (guanosine 5'-monophosphate) and XMP (xanthosine 5'-monophosphate), with the release of PPi. To a lesser extent, also acts on hypoxanthine. This Actinobacillus pleuropneumoniae serotype 5b (strain L20) protein is Xanthine-guanine phosphoribosyltransferase.